We begin with the raw amino-acid sequence, 446 residues long: Exodeoxyribonuclease 7 large subunit (446 aa).

It belongs to the XseA family. Heterooligomer composed of large and small subunits.

It localises to the cytoplasm. It catalyses the reaction Exonucleolytic cleavage in either 5'- to 3'- or 3'- to 5'-direction to yield nucleoside 5'-phosphates.. Bidirectionally degrades single-stranded DNA into large acid-insoluble oligonucleotides, which are then degraded further into small acid-soluble oligonucleotides. This chain is Exodeoxyribonuclease 7 large subunit, found in Streptococcus pneumoniae (strain ATCC BAA-255 / R6).